Here is a 237-residue protein sequence, read N- to C-terminus: Ribonuclease PH (237 aa).

Phosphate is bound by residues R86 and 124–126; that span reads GTR.

Belongs to the RNase PH family. Homohexameric ring arranged as a trimer of dimers.

It carries out the reaction tRNA(n+1) + phosphate = tRNA(n) + a ribonucleoside 5'-diphosphate. Its function is as follows. Phosphorolytic 3'-5' exoribonuclease that plays an important role in tRNA 3'-end maturation. Removes nucleotide residues following the 3'-CCA terminus of tRNAs; can also add nucleotides to the ends of RNA molecules by using nucleoside diphosphates as substrates, but this may not be physiologically important. Probably plays a role in initiation of 16S rRNA degradation (leading to ribosome degradation) during starvation. The polypeptide is Ribonuclease PH (Methylorubrum extorquens (strain CM4 / NCIMB 13688) (Methylobacterium extorquens)).